Reading from the N-terminus, the 200-residue chain is dITP/XTP pyrophosphatase (200 aa).

T8–K13 is a substrate binding site. D69 serves as the catalytic Proton acceptor. D69 contributes to the Mg(2+) binding site. Substrate contacts are provided by residues S70, F154–D157, K177, and H182–R183.

It belongs to the HAM1 NTPase family. Homodimer. It depends on Mg(2+) as a cofactor.

The enzyme catalyses XTP + H2O = XMP + diphosphate + H(+). It catalyses the reaction dITP + H2O = dIMP + diphosphate + H(+). The catalysed reaction is ITP + H2O = IMP + diphosphate + H(+). Its function is as follows. Pyrophosphatase that catalyzes the hydrolysis of nucleoside triphosphates to their monophosphate derivatives, with a high preference for the non-canonical purine nucleotides XTP (xanthosine triphosphate), dITP (deoxyinosine triphosphate) and ITP. Seems to function as a house-cleaning enzyme that removes non-canonical purine nucleotides from the nucleotide pool, thus preventing their incorporation into DNA/RNA and avoiding chromosomal lesions. This is dITP/XTP pyrophosphatase from Vibrio parahaemolyticus serotype O3:K6 (strain RIMD 2210633).